The sequence spans 411 residues: 2,3-bisphosphoglycerate-independent phosphoglycerate mutase (411 aa).

Belongs to the BPG-independent phosphoglycerate mutase family. A-PGAM subfamily.

It carries out the reaction (2R)-2-phosphoglycerate = (2R)-3-phosphoglycerate. The protein operates within carbohydrate degradation; glycolysis; pyruvate from D-glyceraldehyde 3-phosphate: step 3/5. Its function is as follows. Catalyzes the interconversion of 2-phosphoglycerate and 3-phosphoglycerate. The protein is 2,3-bisphosphoglycerate-independent phosphoglycerate mutase of Methanosphaerula palustris (strain ATCC BAA-1556 / DSM 19958 / E1-9c).